The chain runs to 480 residues: Altronate oxidoreductase (480 aa).

Residue 19-30 (ILQFGEGNFLRG) participates in NAD(+) binding.

This sequence belongs to the mannitol dehydrogenase family. UxaB subfamily.

The enzyme catalyses D-altronate + NAD(+) = keto-D-tagaturonate + NADH + H(+). The protein operates within carbohydrate metabolism; pentose and glucuronate interconversion. The protein is Altronate oxidoreductase of Bacillus subtilis (strain 168).